Consider the following 492-residue polypeptide: MDLADIPQQQRLMAGLALVVATVIFLKLLLSFRSGGGKKRLPPTIPGAPVVGGLVKFMRGPIPMIREQYAALGSVFTVPIITRRITFLIGPEVSAHFFKGNEAEMSQQEVYRFNVPTFGPGVVFDVDYSVRQEQFRFFTEALRANKLRSYVDQMVAEAEEYFSKWGESGTVDLKYELEHLIILTASRCLLGREVREKLFDDVSALFHDLDNGIQPISVLFPYLPIPAHKRRDKARARLAEIFATIIKSRKASGQSEEDMLQCFIDSKYKNGRPTTEGEVTGLLIAALFAGQHTSSITSTWTGAYMLRFKQYFAEAVEEQKDVMKRHGDKIDHDILAEMDVLYRCIKEALRLHPPLIMLLRQSHSDFTVTTKEGKEYDIPKGHIVATSPSFANRLPHIYKNPDSYDPDRFGPGREEDKAAGAFSYISFGGGRHGCLGEPFAYLQIKAIWTHLLRNFEFELVSPFPENDWNAMVVGIKGEVMVNYKRRKLVVDN.

The helical transmembrane segment at 12-32 (LMAGLALVVATVIFLKLLLSF) threads the bilayer. Cys-434 provides a ligand contact to heme.

This sequence belongs to the cytochrome P450 family. The cofactor is heme.

Its subcellular location is the membrane. The catalysed reaction is a 14alpha-methyl steroid + 3 reduced [NADPH--hemoprotein reductase] + 3 O2 = a Delta(14) steroid + formate + 3 oxidized [NADPH--hemoprotein reductase] + 4 H2O + 4 H(+). It functions in the pathway steroid biosynthesis; zymosterol biosynthesis; zymosterol from lanosterol: step 1/6. In terms of biological role, catalyzes the 14-alpha demethylation of obtusifoliol to 4 alpha-methyl-5 alpha-ergosta-8,14,24(28)-trien-3 beta-ol. This is Obtusifoliol 14-alpha demethylase (CYP51) from Sorghum bicolor (Sorghum).